We begin with the raw amino-acid sequence, 146 residues long: uncharacterized protein (146 aa).

Positions 1 to 24 (MVIYYGKKNCTLLLLLFILCNIYS) are cleaved as a signal peptide. Residues Asn-99 and Asn-106 are each glycosylated (N-linked (GlcNAc...) asparagine).

This is an uncharacterized protein from Saccharomyces cerevisiae (strain ATCC 204508 / S288c) (Baker's yeast).